Here is a 240-residue protein sequence, read N- to C-terminus: Sorting nexin-3 (240 aa).

A disordered region spans residues 1–85; that stretch reads MSAYPQDTYF…PPVQVTHSPF (85 aa). Residues 22-33 are compositionally biased toward pro residues; the sequence is YQPPPQPQPQQP. Low complexity-rich tracts occupy residues 34-54 and 62-84; these read PYQQ…QPYQ and QQSP…THSP. The PX domain maps to 118-235; the sequence is SFLEIEIRNP…CAFLQDPAWD (118 aa). Residues Arg161, Ser163, Lys187, Arg192, and Arg201 each coordinate a 1,2-diacyl-sn-glycero-3-phospho-(1D-myo-inositol-3-phosphate).

This sequence belongs to the sorting nexin family.

The protein resides in the cytoplasm. The protein localises to the golgi apparatus membrane. Its subcellular location is the prevacuolar compartment membrane. Functionally, required for retention of late Golgi membrane proteins. Component of the retrieval machinery that functions by direct interaction with the cytosolic tails of certain TGN membrane proteins during the sorting/budding process at the prevacuolar compartment. Binds phosphatidylinositol 3-phosphate (PtdIns(P3)). The protein is Sorting nexin-3 (SNX3) of Cryptococcus neoformans var. neoformans serotype D (strain JEC21 / ATCC MYA-565) (Filobasidiella neoformans).